Consider the following 413-residue polypeptide: Cell division protein FtsA (413 aa).

The protein belongs to the FtsA/MreB family. In terms of assembly, self-interacts. Interacts with FtsZ.

Its subcellular location is the cell inner membrane. In terms of biological role, cell division protein that is involved in the assembly of the Z ring. May serve as a membrane anchor for the Z ring. The polypeptide is Cell division protein FtsA (Borreliella burgdorferi (strain ATCC 35210 / DSM 4680 / CIP 102532 / B31) (Borrelia burgdorferi)).